The sequence spans 97 residues: Co-chaperonin GroES (97 aa).

This sequence belongs to the GroES chaperonin family. Heptamer of 7 subunits arranged in a ring. Interacts with the chaperonin GroEL.

It is found in the cytoplasm. Its function is as follows. Together with the chaperonin GroEL, plays an essential role in assisting protein folding. The GroEL-GroES system forms a nano-cage that allows encapsulation of the non-native substrate proteins and provides a physical environment optimized to promote and accelerate protein folding. GroES binds to the apical surface of the GroEL ring, thereby capping the opening of the GroEL channel. This Escherichia fergusonii (strain ATCC 35469 / DSM 13698 / CCUG 18766 / IAM 14443 / JCM 21226 / LMG 7866 / NBRC 102419 / NCTC 12128 / CDC 0568-73) protein is Co-chaperonin GroES.